Consider the following 237-residue polypeptide: Sugar fermentation stimulation protein homolog (237 aa).

Belongs to the SfsA family.

This Pseudomonas syringae pv. tomato (strain ATCC BAA-871 / DC3000) protein is Sugar fermentation stimulation protein homolog.